The primary structure comprises 447 residues: Alkylglycerol monooxygenase (447 aa).

A run of 2 helical transmembrane segments spans residues 43 to 63 (ATPFFIFLILLELVISWILKG) and 111 to 131 (WDSTWTWYFTFLGVDFGYYWF). Residues 119–249 (FTFLGVDFGY…LIIWDRIFGT (131 aa)) enclose the Fatty acid hydroxylase domain. The short motif at 132 to 136 (HRMAH) is the Histidine box-1 element. Residues 145-149 (HQAHH) carry the Histidine box-2 motif. Residues 170–190 (SWVFYCPLALFIPPSVFAVHI) traverse the membrane as a helical segment. The Histidine box-3 signature appears at 221 to 225 (HRVHH). A run of 3 helical transmembrane segments spans residues 340–360 (VLQFAVMLAFYEETFANTAVL), 363–383 (VTLLLRIFFFILTLTSIGFLL), and 413–433 (IPSLSFAFEIFFSVCIAFWGV).

The protein belongs to the sterol desaturase family. TMEM195 subfamily. It depends on Fe cation as a cofactor. Highly expressed in lever and small intestine.

The protein localises to the endoplasmic reticulum membrane. The catalysed reaction is 1-O-(1,2-saturated-alkyl)-sn-glycerol + (6R)-L-erythro-5,6,7,8-tetrahydrobiopterin + O2 = a 1-(1-hydroxyalkyl)-sn-glycerol + (6R)-L-erythro-6,7-dihydrobiopterin + H2O. Functionally, glyceryl-ether monooxygenase that cleaves the O-alkyl bond of ether lipids. Ether lipids are essential components of brain membranes. The sequence is that of Alkylglycerol monooxygenase (Agmo) from Mus musculus (Mouse).